Reading from the N-terminus, the 142-residue chain is Metallothiol transferase FosB (142 aa).

Positions 5-120 (NVNHICFSVS…DGHKIELHTG (116 aa)) constitute a VOC domain. Positions 8, 67, and 116 each coordinate Mg(2+). The active-site Proton donor/acceptor is Glu116.

The protein belongs to the fosfomycin resistance protein family. FosB subfamily. As to quaternary structure, homodimer. Mg(2+) is required as a cofactor.

It is found in the cytoplasm. In terms of biological role, metallothiol transferase which confers resistance to fosfomycin by catalyzing the addition of a thiol cofactor to fosfomycin. L-cysteine is probably the physiological thiol donor. This is Metallothiol transferase FosB from Staphylococcus epidermidis (strain ATCC 35984 / DSM 28319 / BCRC 17069 / CCUG 31568 / BM 3577 / RP62A).